The primary structure comprises 211 residues: Endonuclease III (211 aa).

The 20-residue stretch at 108-127 folds into the HhH domain; that stretch reads REALEALAGVGRKTANVVLN. [4Fe-4S] cluster-binding residues include C187, C194, C197, and C203.

Belongs to the Nth/MutY family. [4Fe-4S] cluster is required as a cofactor.

It carries out the reaction 2'-deoxyribonucleotide-(2'-deoxyribose 5'-phosphate)-2'-deoxyribonucleotide-DNA = a 3'-end 2'-deoxyribonucleotide-(2,3-dehydro-2,3-deoxyribose 5'-phosphate)-DNA + a 5'-end 5'-phospho-2'-deoxyribonucleoside-DNA + H(+). In terms of biological role, DNA repair enzyme that has both DNA N-glycosylase activity and AP-lyase activity. The DNA N-glycosylase activity releases various damaged pyrimidines from DNA by cleaving the N-glycosidic bond, leaving an AP (apurinic/apyrimidinic) site. The AP-lyase activity cleaves the phosphodiester bond 3' to the AP site by a beta-elimination, leaving a 3'-terminal unsaturated sugar and a product with a terminal 5'-phosphate. The polypeptide is Endonuclease III (Haemophilus influenzae (strain ATCC 51907 / DSM 11121 / KW20 / Rd)).